We begin with the raw amino-acid sequence, 550 residues long: Protein UshA (550 aa).

Residues 1 to 25 (MKLLQRGVALALLTTFTLASETALA) form the signal peptide. The Zn(2+) site is built by D41, H43, D84, N116, H217, H252, and Q254. The cysteines at positions 258 and 275 are disulfide-linked. Substrate is bound by residues 375 to 379 (RDKVR) and 498 to 504 (FNATGGD).

The protein belongs to the 5'-nucleotidase family. In terms of assembly, monomer. Zn(2+) serves as cofactor.

The protein resides in the periplasm. The catalysed reaction is UDP-sugar + H2O = UMP + alpha-D-aldose 1-phosphate.. It catalyses the reaction a ribonucleoside 5'-phosphate + H2O = a ribonucleoside + phosphate. The activity of this protein is inhibited by an intracellular protein inhibitor. Functionally, degradation of external UDP-glucose to uridine monophosphate and glucose-1-phosphate, which can then be used by the cell. The sequence is that of Protein UshA (ushA) from Escherichia coli (strain K12).